Here is a 297-residue protein sequence, read N- to C-terminus: 4-diphosphocytidyl-2-C-methyl-D-erythritol kinase (297 aa).

Residue Lys10 is part of the active site. 94 to 104 (PVAAGLAGGSS) lines the ATP pocket. Residue Asp136 is part of the active site.

It belongs to the GHMP kinase family. IspE subfamily.

The catalysed reaction is 4-CDP-2-C-methyl-D-erythritol + ATP = 4-CDP-2-C-methyl-D-erythritol 2-phosphate + ADP + H(+). The protein operates within isoprenoid biosynthesis; isopentenyl diphosphate biosynthesis via DXP pathway; isopentenyl diphosphate from 1-deoxy-D-xylulose 5-phosphate: step 3/6. In terms of biological role, catalyzes the phosphorylation of the position 2 hydroxy group of 4-diphosphocytidyl-2C-methyl-D-erythritol. The chain is 4-diphosphocytidyl-2-C-methyl-D-erythritol kinase from Shouchella clausii (strain KSM-K16) (Alkalihalobacillus clausii).